A 158-amino-acid chain; its full sequence is Globin CTT-I/CTT-IA (158 aa).

A signal peptide spans 1 to 15 (MKFLILALCVAAAMA). One can recognise a Globin domain in the interval 16–158 (GPSGDQIAAA…FVFSTLKNEL (143 aa)). Heme b contacts are provided by His74 and His109.

The protein belongs to the globin family. In terms of assembly, monomer.

This chain is Globin CTT-I/CTT-IA (CTT-1), found in Chironomus thummi thummi (Midge).